Reading from the N-terminus, the 384-residue chain is Ribosomal RNA large subunit methyltransferase G (384 aa).

It belongs to the methyltransferase superfamily. RlmG family.

It localises to the cytoplasm. The catalysed reaction is guanosine(1835) in 23S rRNA + S-adenosyl-L-methionine = N(2)-methylguanosine(1835) in 23S rRNA + S-adenosyl-L-homocysteine + H(+). In terms of biological role, specifically methylates the guanine in position 1835 (m2G1835) of 23S rRNA. This chain is Ribosomal RNA large subunit methyltransferase G, found in Streptomyces griseus subsp. griseus (strain JCM 4626 / CBS 651.72 / NBRC 13350 / KCC S-0626 / ISP 5235).